The primary structure comprises 236 residues: Small ribosomal subunit protein uS2c (236 aa).

Belongs to the universal ribosomal protein uS2 family.

Its subcellular location is the plastid. It localises to the chloroplast. This is Small ribosomal subunit protein uS2c (rps2) from Platanus occidentalis (Sycamore).